Reading from the N-terminus, the 156-residue chain is MRRRKALVREVLPDPIYGNKVITKFINSLMYDGKKSIATKIMYGAINLIDQKGGEKKGIEVFNDAIENVKPVLEVKSRRVGGATYQVPIEVRPARQQALAIRWIIAFARKRSERTMIEKLAYELLDAANSKGSSFKKKEDTYKMAEANKAFAHYRW.

This sequence belongs to the universal ribosomal protein uS7 family. Part of the 30S ribosomal subunit. Contacts proteins S9 and S11.

Functionally, one of the primary rRNA binding proteins, it binds directly to 16S rRNA where it nucleates assembly of the head domain of the 30S subunit. Is located at the subunit interface close to the decoding center, probably blocks exit of the E-site tRNA. This chain is Small ribosomal subunit protein uS7, found in Campylobacter hominis (strain ATCC BAA-381 / DSM 21671 / CCUG 45161 / LMG 19568 / NCTC 13146 / CH001A).